The following is a 460-amino-acid chain: MDNIPNLTILEHSRISPPPSTIGHRSLPLTFFDIAWLLFPPVHHLYFYHFPYSKSHFTETVIPNLKHSLSITLQHYFPFVGKLIVYPNPHDSTRKPEIRHVEGDSVALTFAETTLDFNDLSANHPRKCENFYPLVPPLGNAVKESDYVTLPVFSVQVTYFPNSGISIGLTNHHSLSDANTRFGFLKAWASVCETGEDQPFLKNGSPPVFDRVVVNPQLYENRLNQTRLGTFYQAPSLVGSSSDRVRATFVLARTHISGLKKQVLTQLPMLEYTSSFTVTCGYIWSCIVKSLVNMGEKKGEDELEQFIVSVGCRSRLDPPLPENYFGNCSAPCIVTIKNGVLKGENGFVMAAKLIGEGISKMVNKKGGILEYADRWYDGFKIPARKMGISGTPKLNFYDIDFGWGKAMKYEVVSIDYSASVSLSACKESAQDFEIGVCFPSMQMEAFGKIFNDGLESAIAS.

Residues H173 and D400 each act as proton acceptor in the active site.

The protein belongs to the plant acyltransferase family.

The enzyme catalyses an anthocyanidin 3-O-beta-D-glucoside + malonyl-CoA = an anthocyanidin 3-O-(6-O-malonyl-beta-D-glucoside) + CoA. Completely inhibited by 5 mM N-ethylmaleimide or 0.1 mM Cu(2+). Partially inhibited by 0.1 mM Fe(2+) or 0.1 mM Hg(2+). Its function is as follows. Catalyzes the transfer of the malonyl group from malonyl-CoA to pelargonidin 3-O-glucoside to produce pelargonidin 3-O-6''-O-malonylglucoside. Can also transfer the malonyl group from malonyl-CoA to cyanidin 3-O-glucoside, delphinidin 3-O-glucoside and quercetin 3-O-glucoside. This Dahlia pinnata (Pinnate dahlia) protein is Malonyl-coenzyme A:anthocyanin 3-O-glucoside-6''-O-malonyltransferase.